Reading from the N-terminus, the 551-residue chain is Membrane protein insertase YidC (551 aa).

A helical membrane pass occupies residues 3 to 23 (ANHIRILLLVTIAIMFISLMG). Polar residues predominate over residues 33-47 (NTKQQTSATQNNSHY). Positions 33-58 (NTKQQTSATQNNSHYDNADSSTNTDV) are disordered. The next 3 membrane-spanning stretches (helical) occupy residues 361-381 (LVGNWGLAIILVTCLIKLIFY), 431-451 (LSGCLPMLIQIPIFISLYWVL), and 504-524 (VMMFLPVIFTFLFASFPSGLV).

It belongs to the OXA1/ALB3/YidC family. Type 1 subfamily. As to quaternary structure, interacts with the Sec translocase complex via SecD. Specifically interacts with transmembrane segments of nascent integral membrane proteins during membrane integration.

The protein localises to the cell inner membrane. In terms of biological role, required for the insertion and/or proper folding and/or complex formation of integral membrane proteins into the membrane. Involved in integration of membrane proteins that insert both dependently and independently of the Sec translocase complex, as well as at least some lipoproteins. Aids folding of multispanning membrane proteins. The polypeptide is Membrane protein insertase YidC (Francisella tularensis subsp. novicida (strain U112)).